A 471-amino-acid chain; its full sequence is MEPVSSWGNTSLVSVDPEIHDLIEKEKRRQCRGIELIASENFTSFAVIEALGSALTNKYSEGIPGNRYYGGNEFIDEIENLCRSRALEAFHCDPAAWGVNVQPYSGSPANFAAYTALLQPHDRIMGLDLPSGGHLTHGYYTSGGKKISATSIYFESLPYKVNFTTGYIDYDKLEEKALDFRPKLLICGGSAYPRDWDYARFRAIADKVGALLLCDMAHISGLVAAQEAANPFEYCDVVTTTTHKSLRGPRAGMIFYRKGPKPPKKGQPEGAVYDFEDKINFAVFPALQGGPHNHQIGALAVALKQANTPGFKVYAKQVKANAVALGNYLMSKGYQIVTNGTENHLVLWDLRPLGLTGNKVEKLCDLCSITLNKNAVFGDSSALAPGGVRIGAPAMTSRGLVEKDFEQIGEFLSRAVTLTLDIQKTYGKLLKDFNKGLVNNKDLDQLKADVEKFSASYEMPGFLMSEMKYKD.

At M1 the chain carries N-acetylmethionine. S39 is a binding site for L-serine. S39, Y59, and E61 together coordinate pemetrexed. Residues E61 and Y69 each contribute to the L-serine site. Pemetrexed contacts are provided by residues 105–107 (SGS), H134, S190, and H218. Positions 218 and 244 each coordinate L-serine. At K244 the chain carries N6-(pyridoxal phosphate)lysine. G290 provides a ligand contact to pemetrexed. K373 serves as a coordination point for methotrexate. Residue R389 coordinates L-serine. R389 lines the pemetrexed pocket.

Belongs to the SHMT family. As to quaternary structure, homotetramer. Interacts with UBP16. Pyridoxal 5'-phosphate serves as cofactor. As to expression, mostly expressed in flowers, less abundant in roots, inflorescence stems, and siliques, and barely detectable in leaves.

The protein resides in the cytoplasm. The enzyme catalyses (6R)-5,10-methylene-5,6,7,8-tetrahydrofolate + glycine + H2O = (6S)-5,6,7,8-tetrahydrofolate + L-serine. It participates in one-carbon metabolism; tetrahydrofolate interconversion. Inhibited by the antifolate drugs methotrexate and pemetrexed. Its function is as follows. Catalyzes the interconversion of serine and glycine with the conversion of tetrahydrofolate (THF) into 5,10-methylene-THF. The polypeptide is Serine hydroxymethyltransferase 4 (Arabidopsis thaliana (Mouse-ear cress)).